Here is a 494-residue protein sequence, read N- to C-terminus: MASGILVNVKEEVTCPICLELLTQPLSLDCGHSFCQACLTANHKTSMPDEGERSCPVCRISYQHKNIRPNRHVANIVEKLREVKLSPEEGQKVDHCARHGEKLLLFCREDRKVICWLCERSQEHRGHHTFLTEEVAQEYQMKLQAALQMLRQKQQEAEELEADIREEKASWKTQIQYDKTNILADFEQLRHILDWVESNELQNLEKEKKDVLKRLMKSEIEMVQQTQSVRELISDLEHRLQGSVMELLQGVDGIIKRMKNVTLKKPETFPKNKRRVFRAADLKVMLEVLRELRDVRRYWVDVTVAPNNISYAVISEDMRQVSSPEPQIICEAQGTISQTFVNFNYCTGILGSQSITSGKHYWEVDVSKKSAWILGVCAGLQPDAMYNIEQNENYQPKCGYWVIGLEERVKCNAFQDGSFHTPSAPFIVPLSVNICPDRVGVFLDYEACTVSFFNITDHGFLIYKFSRCSFSQPVFPYLNPRKCTVPMTLCSPSS.

Alanine 2 is modified (N-acetylalanine). The segment at 15-59 adopts an RING-type zinc-finger fold; that stretch reads CPICLELLTQPLSLDCGHSFCQACLTANHKTSMPDEGERSCPVCR. A Phosphoserine modification is found at serine 86. Residues 91–133 form a B box-type zinc finger; that stretch reads QKVDHCARHGEKLLLFCREDRKVICWLCERSQEHRGHHTFLTE. Positions 96, 99, 118, and 124 each coordinate Zn(2+). Residues 132–241 adopt a coiled-coil conformation; sequence TEEVAQEYQM…LISDLEHRLQ (110 aa). The required for interaction with GABARAP and for autophagy stretch occupies residues 186–199; that stretch reads FEQLRHILDWVESN. The B30.2/SPRY domain occupies 282–494; the sequence is LKVMLEVLRE…VPMTLCSPSS (213 aa).

The protein belongs to the TRIM/RBCC family. In terms of assembly, can form homodimers and homotrimers. In addition to lower-order dimerization, also exhibits a higher-order multimerization and both low- and high-order multimerizations are essential for its restriction activity. Interacts with BTBD1 and BTBD2. Interacts with PSMC4, PSMC5, PSMD7 and HSPA8/HSC70. Interacts (via B30.2/SPRY domain) with HSPA1A/B. Interacts with PSMC2, MAP3K7/TAK1, TAB2 and TAB3. Interacts with SQSTM1. Interacts with TRIM6 and TRIM34. Interacts with ULK1 (phosphorylated form), GABARAP, GABARAPL1, GABARAPL2, MAP1LC3A, MAP1LC3C and BECN1. Post-translationally, degraded in a proteasome-independent fashion in the absence of viral infection but in a proteasome-dependent fashion following exposure to restriction sensitive virus. In terms of processing, autoubiquitinated in a RING finger- and UBE2D2-dependent manner. Monoubiquitinated by TRIM21. Deubiquitinated by Yersinia YopJ. Ubiquitination may not lead to proteasomal degradation.

The protein localises to the cytoplasm. It localises to the nucleus. The enzyme catalyses S-ubiquitinyl-[E2 ubiquitin-conjugating enzyme]-L-cysteine + [acceptor protein]-L-lysine = [E2 ubiquitin-conjugating enzyme]-L-cysteine + N(6)-ubiquitinyl-[acceptor protein]-L-lysine.. It participates in protein modification; protein ubiquitination. In terms of biological role, capsid-specific restriction factor that prevents infection from non-host-adapted retroviruses. Blocks viral replication early in the life cycle, after viral entry but before reverse transcription. In addition to acting as a capsid-specific restriction factor, also acts as a pattern recognition receptor that activates innate immune signaling in response to the retroviral capsid lattice. Binding to the viral capsid triggers its E3 ubiquitin ligase activity, and in concert with the heterodimeric ubiquitin conjugating enzyme complex UBE2V1-UBE2N (also known as UBC13-UEV1A complex) generates 'Lys-63'-linked polyubiquitin chains, which in turn are catalysts in the autophosphorylation of the MAP3K7/TAK1 complex (includes TAK1, TAB2, and TAB3). Activation of the MAP3K7/TAK1 complex by autophosphorylation results in the induction and expression of NF-kappa-B and MAPK-responsive inflammatory genes, thereby leading to an innate immune response in the infected cell. Plays a role in regulating autophagy through activation of autophagy regulator BECN1 by causing its dissociation from its inhibitors BCL2 and TAB2. The polypeptide is Tripartite motif-containing protein 5 (TRIM5) (Hoolock hoolock (Western hoolock gibbon)).